The chain runs to 1040 residues: Eukaryotic translation initiation factor 3 subunit A (1040 aa).

The stretch at 92-121 forms a coiled coil; that stretch reads LKKFIELAEKKVTEAQTKADEIQSSLESAA. The region spanning 339–523 is the PCI domain; that stretch reads MTKAASFVLL…GVLTFDSDVF (185 aa). The stretch at 608 to 906 forms a coiled coil; that stretch reads RVIIEKKKEA…AEARRAARKA (299 aa). Composition is skewed to basic and acidic residues over residues 617-632 and 795-901; these read AATD…EETR and EVSE…EARR. Disordered regions lie at residues 617 to 641 and 795 to 1040; these read AATD…QQLQ and EVSE…QQNQ. 4 stretches are compositionally biased toward low complexity: residues 908 to 917, 945 to 955, 978 to 993, and 1004 to 1018; these read LEPAAPAARP, KEAAGGAAPEA, SGSS…NGAP, and SSSS…TPGS.

The protein belongs to the eIF-3 subunit A family. In terms of assembly, component of the eukaryotic translation initiation factor 3 (eIF-3) complex.

It localises to the cytoplasm. Functionally, RNA-binding component of the eukaryotic translation initiation factor 3 (eIF-3) complex, which is involved in protein synthesis of a specialized repertoire of mRNAs and, together with other initiation factors, stimulates binding of mRNA and methionyl-tRNAi to the 40S ribosome. The eIF-3 complex specifically targets and initiates translation of a subset of mRNAs involved in cell proliferation. This Aspergillus terreus (strain NIH 2624 / FGSC A1156) protein is Eukaryotic translation initiation factor 3 subunit A (tif32).